The sequence spans 525 residues: Patatin-like protein 8 (525 aa).

Residues 1–50 form a disordered region; it reads MNRRYEKPPPLSVSSKGKKKHFVNHTAPNTPGNYERTQTSPTLSTARSHE. Residues 26–46 show a composition bias toward polar residues; that stretch reads TAPNTPGNYERTQTSPTLSTA. A PNPLA domain is found at 124–338; sequence LSIDGGGMRG…AMSNPTAAAI (215 aa). Positions 128 to 133 match the GXGXXG motif; it reads GGGMRG. The active-site Nucleophile is Ser-168.

Belongs to the patatin family. In terms of tissue distribution, specifically expressed in roots.

In terms of biological role, possesses non-specific lipolytic acyl hydrolase (LAH) activity. Hydrolyzes phospholipids as well as galactolipids. May play a role in disease resistance. The protein is Patatin-like protein 8 (PLP8) of Arabidopsis thaliana (Mouse-ear cress).